A 261-amino-acid chain; its full sequence is Probable membrane transporter protein ORF9 (261 aa).

8 helical membrane-spanning segments follow: residues 8 to 28 (LLAF…IAGG), 29 to 49 (GGMI…QTLG), 78 to 98 (LPMA…ATIV), 100 to 120 (GDVL…YFGL), 133 to 151 (VTPF…FYDG), 152 to 171 (VFGP…LAGF), 189 to 209 (VGAF…GLLM), and 231 to 251 (IIKP…LADP).

It belongs to the 4-toluene sulfonate uptake permease (TSUP) (TC 2.A.102) family.

The protein resides in the cell membrane. The protein is Probable membrane transporter protein ORF9 of Sinorhizobium sp.